Consider the following 133-residue polypeptide: Small ribosomal subunit protein uS11 (133 aa).

The protein belongs to the universal ribosomal protein uS11 family. As to quaternary structure, part of the 30S ribosomal subunit. Interacts with proteins S7 and S18. Binds to IF-3.

Its function is as follows. Located on the platform of the 30S subunit, it bridges several disparate RNA helices of the 16S rRNA. Forms part of the Shine-Dalgarno cleft in the 70S ribosome. This Chlamydia pneumoniae (Chlamydophila pneumoniae) protein is Small ribosomal subunit protein uS11.